We begin with the raw amino-acid sequence, 248 residues long: tRNA pseudouridine synthase A (248 aa).

Asp-53 serves as the catalytic Nucleophile. Tyr-111 provides a ligand contact to substrate.

It belongs to the tRNA pseudouridine synthase TruA family. Homodimer.

The catalysed reaction is uridine(38/39/40) in tRNA = pseudouridine(38/39/40) in tRNA. Functionally, formation of pseudouridine at positions 38, 39 and 40 in the anticodon stem and loop of transfer RNAs. The protein is tRNA pseudouridine synthase A of Listeria innocua serovar 6a (strain ATCC BAA-680 / CLIP 11262).